The sequence spans 218 residues: Octanoyltransferase (218 aa).

A BPL/LPL catalytic domain is found at 32–214 (VLTADEIWLV…HFTQLLGYND (183 aa)). Substrate contacts are provided by residues 71 to 78 (RGGQITYH), 143 to 145 (SLG), and 156 to 158 (GLA). The active-site Acyl-thioester intermediate is C174.

It belongs to the LipB family.

The protein resides in the cytoplasm. The enzyme catalyses octanoyl-[ACP] + L-lysyl-[protein] = N(6)-octanoyl-L-lysyl-[protein] + holo-[ACP] + H(+). It functions in the pathway protein modification; protein lipoylation via endogenous pathway; protein N(6)-(lipoyl)lysine from octanoyl-[acyl-carrier-protein]: step 1/2. Catalyzes the transfer of endogenously produced octanoic acid from octanoyl-acyl-carrier-protein onto the lipoyl domains of lipoate-dependent enzymes. Lipoyl-ACP can also act as a substrate although octanoyl-ACP is likely to be the physiological substrate. This Histophilus somni (strain 2336) (Haemophilus somnus) protein is Octanoyltransferase.